The following is a 186-amino-acid chain: Small ribosomal subunit protein uS5 (186 aa).

In terms of domain architecture, S5 DRBM spans 20-83; sequence FVDKLVHINR…EAAKRDMIFV (64 aa).

The protein belongs to the universal ribosomal protein uS5 family. Part of the 30S ribosomal subunit. Contacts proteins S4 and S8.

In terms of biological role, with S4 and S12 plays an important role in translational accuracy. Functionally, located at the back of the 30S subunit body where it stabilizes the conformation of the head with respect to the body. The chain is Small ribosomal subunit protein uS5 from Brucella abortus (strain S19).